The following is a 199-amino-acid chain: MSNMEKHLFNLKFAAKELGRSAKKCDKEEKAEKAKIKKAIQKGNMEVARIHAENAIRQKNQAVNFLRMSARVDAVAARVQTAVTMGKVTKSMAGVVKSMDATLKTMNLEKISALMDKFEHQFETLDVQTQQMEDTMSSTTTLTTPQGQVDMLLQEMADEAGLDLNMELPQGQTGSVGTSVASAEQDELSQRLARLRDQV.

Residues 26 to 48 are a coiled coil; sequence DKEEKAEKAKIKKAIQKGNMEVA. Residues 132-156 are interaction with IST1; it reads MEDTMSSTTTLTTPQGQVDMLLQEM. A disordered region spans residues 167-199; sequence ELPQGQTGSVGTSVASAEQDELSQRLARLRDQV. Residues 170 to 182 are compositionally biased toward polar residues; it reads QGQTGSVGTSVAS. Residues 174 to 199 form an interaction with SPAST region; sequence GSVGTSVASAEQDELSQRLARLRDQV. The stretch at 178-199 forms a coiled coil; sequence TSVASAEQDELSQRLARLRDQV. The tract at residues 180–196 is interaction with VPS4A, MITD1 and STAMBP; sequence VASAEQDELSQRLARLR. Residues 180–199 are interaction with VTA1; that stretch reads VASAEQDELSQRLARLRDQV. Residues 183–199 are interaction with VPS4B; sequence AEQDELSQRLARLRDQV. The MIT-interacting motif signature appears at 186–196; the sequence is DELSQRLARLR.

The protein belongs to the SNF7 family. Probable peripherally associated component of the endosomal sorting required for transport complex III (ESCRT-III). ESCRT-III components are thought to multimerize to form a flat lattice on the perimeter membrane of the endosome. Several assembly forms of ESCRT-III may exist that interact and act sequentially. Interacts with CHMP1A. Interacts with VTA1; the interaction probably involves the open conformation of CHMP1B. Interacts with CHMP2A. Interacts with VPS4A; the interaction is direct. Interacts with VPS4B; the interaction is direct. Interacts with SPAST (via MIT domain); the interaction is direct. Interacts with IST1. Interacts with MITD1. Interacts with STAMBP.

It localises to the cytoplasm. The protein resides in the cytosol. The protein localises to the endosome. Its subcellular location is the late endosome membrane. Probable peripherally associated component of the endosomal sorting required for transport complex III (ESCRT-III) which is involved in multivesicular bodies (MVBs) formation and sorting of endosomal cargo proteins into MVBs. MVBs contain intraluminal vesicles (ILVs) that are generated by invagination and scission from the limiting membrane of the endosome and mostly are delivered to lysosomes enabling degradation of membrane proteins, such as stimulated growth factor receptors, lysosomal enzymes and lipids. The MVB pathway appears to require the sequential function of ESCRT-O, -I,-II and -III complexes. ESCRT-III proteins mostly dissociate from the invaginating membrane before the ILV is released. The ESCRT machinery also functions in topologically equivalent membrane fission events, such as the terminal stages of cytokinesis and the budding of enveloped viruses (lentiviruses). ESCRT-III proteins are believed to mediate the necessary vesicle extrusion and/or membrane fission activities, possibly in conjunction with the AAA ATPase VPS4. Involved in cytokinesis. Involved in recruiting VPS4A and/or VPS4B and SPAST to the midbody of dividing cells. In Bos taurus (Bovine), this protein is Charged multivesicular body protein 1b (CHMP1B).